The sequence spans 167 residues: Zymogen granule membrane protein 16 (167 aa).

The N-terminal stretch at 1-16 (MLTVALLALLCASASG) is a signal peptide. Positions 24–159 (SSYSGEYGGG…IDAIGLHWDV (136 aa)) constitute a Jacalin-type lectin domain.

It belongs to the jacalin lectin family. Highly expressed in liver. Detected at lower levels in colon, ileum and jejunum.

It is found in the secreted. Its subcellular location is the extracellular space. The protein localises to the extracellular matrix. The protein resides in the zymogen granule lumen. It localises to the golgi apparatus lumen. May play a role in protein trafficking. May act as a linker molecule between the submembranous matrix on the luminal side of zymogen granule membrane (ZGM) and aggregated secretory proteins during granule formation in the TGN. The protein is Zymogen granule membrane protein 16 (ZG16) of Homo sapiens (Human).